A 331-amino-acid polypeptide reads, in one-letter code: dTDP-glucose 4,6-dehydratase (331 aa).

NAD(+) contacts are provided by residues 11 to 12, 33 to 36, 57 to 58, 77 to 81, and S96; these read FI, DALT, DI, and FAAET. T81 provides a ligand contact to substrate. T120 provides a ligand contact to substrate. The active-site Proton donor is D121. Active-site proton acceptor residues include E122 and Y147. 147–151 contributes to the NAD(+) binding site; it reads YSSTK. N176 serves as a coordination point for substrate. Residue N177 participates in NAD(+) binding. Substrate contacts are provided by residues 186–191, 202–204, R211, N246, and 269–273; these read KFIPRQ, KLY, and DRAGH.

Belongs to the NAD(P)-dependent epimerase/dehydratase family. dTDP-glucose dehydratase subfamily. In terms of assembly, homodimer. The cofactor is NAD(+).

It catalyses the reaction dTDP-alpha-D-glucose = dTDP-4-dehydro-6-deoxy-alpha-D-glucose + H2O. It functions in the pathway carbohydrate biosynthesis; dTDP-L-rhamnose biosynthesis. Its function is as follows. Catalyzes the dehydration of dTDP-D-glucose to form dTDP-6-deoxy-D-xylo-4-hexulose via a three-step process involving oxidation, dehydration and reduction. Involved in the biosynthesis of the dTDP-L-rhamnose which is a component of the critical linker, D-N-acetylglucosamine-L-rhamnose disaccharide, which connects the galactan region of arabinogalactan to peptidoglycan via a phosphodiester linkage. The sequence is that of dTDP-glucose 4,6-dehydratase (rmlB) from Mycolicibacterium smegmatis (strain ATCC 700084 / mc(2)155) (Mycobacterium smegmatis).